Reading from the N-terminus, the 162-residue chain is Cyclic pyranopterin monophosphate synthase (162 aa).

Substrate-binding positions include 75–77 (LCH) and 113–114 (ME). The active site involves D128.

It belongs to the MoaC family. As to quaternary structure, homohexamer; trimer of dimers.

It catalyses the reaction (8S)-3',8-cyclo-7,8-dihydroguanosine 5'-triphosphate = cyclic pyranopterin phosphate + diphosphate. The protein operates within cofactor biosynthesis; molybdopterin biosynthesis. Functionally, catalyzes the conversion of (8S)-3',8-cyclo-7,8-dihydroguanosine 5'-triphosphate to cyclic pyranopterin monophosphate (cPMP). This is Cyclic pyranopterin monophosphate synthase from Burkholderia orbicola (strain MC0-3).